We begin with the raw amino-acid sequence, 807 residues long: Sucrose synthase 1 (807 aa).

A GT-B glycosyltransferase region spans residues 272-748 (MMFNVVILSP…GLKRIYEKYT (477 aa)).

Belongs to the glycosyltransferase 1 family. Plant sucrose synthase subfamily. Forms homotetramers. In endosperm it forms both homotetramers and heterotetramers with SS2, all three possible heterotetramers are formed. Highly expressed in developing endosperm and in roots and, at lower levels, in coleoptiles and aleurone. In 3 day old roots it is detected in cap cells and along the vascular strand, starting just after the meristemic region. In 9 day old leaves it is found in the phloem. In seeds it is distributed throughout the endosperm and also found in the assimilate-unloading tissues, the nucellar projection, the vascular area and at a high concentration in the chalazal region.

The catalysed reaction is an NDP-alpha-D-glucose + D-fructose = a ribonucleoside 5'-diphosphate + sucrose + H(+). Its function is as follows. Sucrose-cleaving enzyme that provides UDP-glucose and fructose for various metabolic pathways. The chain is Sucrose synthase 1 (SS1) from Hordeum vulgare (Barley).